Consider the following 55-residue polypeptide: Putative virulence-regulating protein PA2146 (55 aa).

The segment at 1 to 55 is disordered; it reads MAQHQGGKGNFAEDPKRASEAGKKGGQASGGNFKNDPQRASEAGKKGGQRSHGGN. Composition is skewed to basic and acidic residues over residues 11–23 and 36–45; these read FAEDPKRASEAGK and DPQRASEAGK.

The protein belongs to the con-10 family.

Functionally, may be involved in the regulation of the production of pyocyanine, one of the major virulence factors secreted by P.aeruginosa, and other virulence factors. The sequence is that of Putative virulence-regulating protein PA2146 from Pseudomonas aeruginosa (strain ATCC 15692 / DSM 22644 / CIP 104116 / JCM 14847 / LMG 12228 / 1C / PRS 101 / PAO1).